The chain runs to 130 residues: Nascent polypeptide-associated complex protein (130 aa).

Residues 6-74 (GMNPRKMQQM…PVERDAADAI (69 aa)) form the NAC-A/B domain. The interval 65 to 91 (PVERDAADAIEAAPADDSDDTDDDDAI) is disordered. Residues 78–90 (PADDSDDTDDDDA) show a composition bias toward acidic residues.

It belongs to the NAC-alpha family. Homodimer. Interacts with the ribosome. Binds ribosomal RNA.

Functionally, contacts the emerging nascent chain on the ribosome. The chain is Nascent polypeptide-associated complex protein from Halobacterium salinarum (strain ATCC 700922 / JCM 11081 / NRC-1) (Halobacterium halobium).